Here is a 446-residue protein sequence, read N- to C-terminus: Argininosuccinate synthase (446 aa).

ATP is bound by residues 17-25 and A43; that span reads AFSGGLDTS. Residue Y99 coordinates L-citrulline. ATP-binding residues include G129 and T131. L-aspartate is bound by residues T131, N135, and D136. N135 contributes to the L-citrulline binding site. D136 serves as a coordination point for ATP. Positions 139 and 192 each coordinate L-citrulline. D194 is a binding site for ATP. Positions 201, 203, and 280 each coordinate L-citrulline.

This sequence belongs to the argininosuccinate synthase family. Type 2 subfamily. As to quaternary structure, homotetramer.

It localises to the cytoplasm. It catalyses the reaction L-citrulline + L-aspartate + ATP = 2-(N(omega)-L-arginino)succinate + AMP + diphosphate + H(+). The protein operates within amino-acid biosynthesis; L-arginine biosynthesis; L-arginine from L-ornithine and carbamoyl phosphate: step 2/3. The sequence is that of Argininosuccinate synthase from Polaromonas sp. (strain JS666 / ATCC BAA-500).